The sequence spans 82 residues: Large ribosomal subunit protein bL31B (82 aa).

Belongs to the bacterial ribosomal protein bL31 family. Type B subfamily. Part of the 50S ribosomal subunit.

The polypeptide is Large ribosomal subunit protein bL31B (Dichelobacter nodosus (strain VCS1703A)).